We begin with the raw amino-acid sequence, 424 residues long: Inositol phosphosphingolipids phospholipase C (424 aa).

Residue E49 participates in Mg(2+) binding. The Proton acceptor role is filled by H289. 2 helical membrane-spanning segments follow: residues 335 to 357 and 364 to 386; these read LRIAHLLISIPLIIGVHVAIAWC and VIILFFTVMLTIAAVVNGFCIGL.

Belongs to the neutral sphingomyelinase family. The cofactor is Mg(2+).

It localises to the cell membrane. The protein localises to the endoplasmic reticulum membrane. Its pathway is lipid metabolism; sphingolipid metabolism. Inositol phosphosphingolipids phospholipase essential for the coordination of cell wall formation. Responsible for the hydrolysis of the phosphosphingolipids (IPS), inositol phosphorylceramide (IPC), mannosylinositol phosphorylceramide (MIPC), and mannosyldiinositol phosphorylceramide (M(IP)2C). The chain is Inositol phosphosphingolipids phospholipase C (css1) from Schizosaccharomyces pombe (strain 972 / ATCC 24843) (Fission yeast).